The following is a 5412-amino-acid chain: Mucin-4 (5412 aa).

The first 28 residues, 1 to 28 (MKGARWRRVPWVSLSCLCLCLLPHVVPG), serve as a signal peptide directing secretion. Disordered regions lie at residues 40–87 (TAAP…TTSK) and 142–249 (TSTD…ATSS). A variable number of tandem repeats (VNTR) region spans residues 43 to 4241 (PVTSTGSTTA…SVSTGHATPL (4199 aa)). The segment covering 142-163 (TSTDSTLGNTEETSTAGTESST) has biased composition (low complexity). O-linked (GalNAc...) threonine glycans are attached at residues Thr-154 and Thr-156. Over residues 164 to 199 (PVTSAVSITAGQEGQSRTTSWRTSIQDTSASSQNHW) the composition is skewed to polar residues. Residues 200 to 223 (TRSTQTTRESQTSTLTHRTTSTPS) are compositionally biased toward low complexity. Residues 224-249 (FSPSVHNVTGTVSQKTSPSGETATSS) show a composition bias toward polar residues. A glycan (N-linked (GlcNAc...) asparagine) is linked at Asn-230. Residue Thr-234 is glycosylated (O-linked (GalNAc...) threonine). N-linked (GlcNAc...) asparagine glycosylation is present at Asn-255. Composition is skewed to polar residues over residues 267-285 (TTST…SVPV), 306-328 (SPAT…HQTQ), and 358-367 (GFNPSGTVSQ). Disordered regions lie at residues 267–286 (TTST…VPVT), 303–328 (EGQS…HQTQ), 353–383 (LSSP…PSSV), 438–473 (LSPS…SFSP), 488–580 (WPSS…ALLS), 592–853 (TATS…ASAS), 868–963 (VPGT…SGSG), 983–1864 (SSAS…DASS), 1878–2078 (ASSV…TGHA), 2111–2220 (TALH…ASTG), 2232–2814 (SAST…TGHA), 2837–3306 (IPSS…SSVS), 3320–3580 (SAST…VSTG), 3592–3644 (SVST…VSTG), 3656–3756 (SVST…ASTG), and 3769–4223 (VSTG…GHAT). Thr-364, Thr-369, and Thr-376 each carry an O-linked (GalNAc...) threonine glycan. Residues 368-383 (ETFPSGETTTSSPSSV) show a composition bias toward low complexity. Polar residues-rich tracts occupy residues 450 to 459 (AFHTQQSEGA), 488 to 526 (WPSS…TGTA), and 546 to 557 (TTYSSHSTTLPK). Low complexity-rich tracts occupy residues 558–577 (TTGA…TGEA) and 615–627 (STNH…TSTS). Asn-617 carries an N-linked (GlcNAc...) asparagine glycan. Thr-620, Thr-666, and Thr-688 each carry an O-linked (GalNAc...) threonine glycan. Positions 628 to 677 (PQESPAVSQRGHTQAPQTTQESQTTRSVSPMTDTKTVTTPGSSFTASGHS) are enriched in polar residues. Over residues 705 to 717 (TTQAPTTALQAAP) the composition is skewed to low complexity. Polar residues predominate over residues 729–746 (GTSLSKTGALTLANSVVS). The O-linked (GalNAc...) threonine glycan is linked to Thr-747. Low complexity predominate over residues 756–771 (TSASASTSPDTAAAMT). Residues 772–789 (HTHQAESTEASGQTQTSE) are compositionally biased toward polar residues. Low complexity predominate over residues 790–828 (PASSGSRTTSAGTATPSSSGASGTTPSGSEGISTSGETT). 6 O-linked (GalNAc...) threonine glycosylation sites follow: Thr-797, Thr-798, Thr-802, Thr-804, Thr-813, and Thr-814. A compositionally biased stretch (polar residues) spans 829–852 (RFSSNPSRDSHTTQSTTELLSASA). Thr-881, Thr-886, and Thr-892 each carry an O-linked (GalNAc...) threonine glycan. Over residues 885-903 (PTGQSSPTSPSASPQETAA) the composition is skewed to low complexity. Over residues 907–928 (MAQTQRTRTSRGSDTISLASQA) the composition is skewed to polar residues. A compositionally biased stretch (low complexity) spans 929–950 (TDTFSTVPPTPPSITSTGLTSP). 54 O-linked (GalNAc...) threonine glycosylation sites follow: Thr-931, Thr-934, Thr-938, Thr-943, Thr-945, Thr-948, Thr-952, Thr-954, Thr-1003, Thr-1007, Thr-1012, Thr-1019, Thr-1022, Thr-1023, Thr-1028, Thr-1030, Thr-1035, Thr-1039, Thr-1044, Thr-1051, Thr-1055, Thr-1060, Thr-1062, Thr-1067, Thr-1071, Thr-1076, Thr-1083, Thr-1086, Thr-1087, Thr-1092, Thr-1094, Thr-1099, Thr-1103, Thr-1108, Thr-1110, Thr-1115, Thr-1118, Thr-1119, Thr-1124, Thr-1126, Thr-1131, Thr-1135, Thr-1172, Thr-1179, Thr-1182, Thr-1183, Thr-1188, Thr-1195, Thr-1199, Thr-1204, Thr-1236, Thr-1243, Thr-1246, and Thr-1247. Residues 951–963 (QTETHTLSPSGSG) show a composition bias toward polar residues. The segment covering 1007 to 1024 (TPLPVTSPSSVSTGHTTP) has biased composition (low complexity). Over residues 1028-1054 (TDTSSESTGHVTPLPVTSFSSASTGDS) the composition is skewed to polar residues. The segment covering 1060 to 1086 (TDTSSASTGHVTPLPVTSLSSASTGDT) has biased composition (polar residues). A compositionally biased stretch (polar residues) spans 1092–1118 (TDTSSASTGHATSLPVTDTSSVSTGHT). Polar residues-rich tracts occupy residues 1124–1150 (TDTS…TGHT) and 1157–1197 (DASS…STGH). 2 stretches are compositionally biased toward polar residues: residues 1204–1213 (TDTSSASTGH) and 1221–1246 (DASS…TGHT). Residues 1252 to 1262 (TDTSSASTGQA) are compositionally biased toward polar residues. Positions 1263-1279 (TSLLVTDTSSVSTGDTT) are enriched in low complexity. O-linked (GalNAc...) threonine glycosylation is found at Thr-1278, Thr-1279, Thr-1284, Thr-1286, Thr-1291, Thr-1295, Thr-1300, Thr-1307, Thr-1311, Thr-1316, Thr-1323, Thr-1326, Thr-1332, Thr-1339, Thr-1342, Thr-1343, and Thr-1348. Polar residues predominate over residues 1281 to 1325 (LPVTSTSSASTGHVTPLHVTSPSSASTGHATPLPVTSLSSASTGD). The segment covering 1332 to 1342 (TSPSSASTGDT) has biased composition (polar residues). Composition is skewed to polar residues over residues 1349 to 1358 (DASSVSTGHT) and 1365 to 1405 (DASS…STGH). Residues Thr-1380, Thr-1387, Thr-1390, Thr-1391, Thr-1396, Thr-1403, Thr-1407, Thr-1412, Thr-1444, Thr-1451, Thr-1454, and Thr-1455 are each glycosylated (O-linked (GalNAc...) threonine). 2 stretches are compositionally biased toward polar residues: residues 1412-1421 (TDTSSASTGH) and 1429-1454 (DASS…TGHT). A compositionally biased stretch (polar residues) spans 1460 to 1470 (TDTSSASTGQA). The span at 1471–1487 (TSLLVTDTSSVSTGDTT) shows a compositional bias: low complexity. O-linked (GalNAc...) threonine glycans are attached at residues Thr-1486, Thr-1487, Thr-1492, Thr-1494, Thr-1499, Thr-1503, Thr-1508, Thr-1515, Thr-1519, Thr-1524, Thr-1531, Thr-1534, Thr-1540, Thr-1547, Thr-1550, Thr-1551, Thr-1556, Thr-1563, Thr-1566, Thr-1567, Thr-1572, Thr-1579, Thr-1582, Thr-1583, Thr-1588, Thr-1590, Thr-1598, Thr-1599, Thr-1604, Thr-1611, Thr-1614, Thr-1615, Thr-1620, Thr-1622, Thr-1627, and Thr-1630. Residues 1489 to 1533 (LPVTSTSSASTGHVTPLHVTSPSSASTGHATPLPVTSLSSASTGD) show a composition bias toward polar residues. The segment covering 1540-1550 (TSPSSASTGDT) has biased composition (polar residues). Residues 1557–1582 (DASSVSTGHTTPLPVTSPSSASTGHT) are compositionally biased toward polar residues. Over residues 1588-1614 (TDTSSASKGDTTPLPVTSPSSASTGHT) the composition is skewed to polar residues. Positions 1620-1631 (TDTSSASTGDTT) are enriched in low complexity. A compositionally biased stretch (polar residues) spans 1633–1661 (LPVTNASSLSTGHATPLHVTSPSSASTGH). N-linked (GlcNAc...) asparagine glycosylation occurs at Asn-1637. Thr-1659, Thr-1663, Thr-1668, Thr-1670, Thr-1675, Thr-1679, Thr-1716, Thr-1723, Thr-1726, Thr-1727, Thr-1732, Thr-1764, Thr-1766, Thr-1812, Thr-1819, Thr-1822, Thr-1823, Thr-1828, Thr-1835, Thr-1838, Thr-1839, Thr-1844, Thr-1854, and Thr-1855 each carry an O-linked (GalNAc...) threonine glycan. Positions 1668–1679 (TSTSSASTGHAT) are enriched in low complexity. Composition is skewed to polar residues over residues 1701–1741 (DVSS…STGH), 1749–1773 (DASS…STAH), and 1812–1822 (TSPSSASTGDT). Low complexity predominate over residues 1828 to 1840 (TDASSASTGDTTS). Polar residues-rich tracts occupy residues 1841 to 1864 (LPVT…DASS), 1892 to 1902 (TDTNSASTGDT), and 1909 to 1950 (DASS…SGHT). Thr-1931, Thr-1934, Thr-1935, Thr-1940, Thr-1950, Thr-1951, Thr-1956, Thr-1963, Thr-1995, Thr-1999, Thr-2004, Thr-2006, Thr-2015, Thr-2020, Thr-2027, Thr-2030, Thr-2031, Thr-2036, Thr-2038, Thr-2047, Thr-2052, Thr-2062, Thr-2063, Thr-2132, Thr-2137, Thr-2139, Thr-2142, Thr-2143, Thr-2148, Thr-2150, Thr-2155, Thr-2159, Thr-2164, Thr-2180, Thr-2182, Thr-2187, Thr-2191, Thr-2196, Thr-2198, Thr-2203, Thr-2207, Thr-2244, Thr-2254, and Thr-2255 each carry an O-linked (GalNAc...) threonine glycan. Over residues 1957–1981 (DASSVPTGHATSLPVTDASSVSTGH) the composition is skewed to polar residues. Residues 2004 to 2030 (TDTSSVSTGQATPLPVTSLSSASTGDT) show a composition bias toward polar residues. Positions 2036–2077 (TDTSSASTGQDTPLPVTSLSSVSTGDTTPLPVTNPSSASTGH) are enriched in polar residues. Over residues 2125–2146 (DTTPLPVTSPSSTSTGDTTPLP) the composition is skewed to low complexity. Residues 2148–2189 (TETSSVSTGHATSLPVTDTSSASTGHATSLPVTDTSSASTGH) show a composition bias toward polar residues. Polar residues-rich tracts occupy residues 2196–2219 (TDTS…SAST) and 2232–2254 (SAST…TGDT). Residues 2261–2270 (DASSVSTGHA) are compositionally biased toward polar residues. The segment covering 2271–2283 (TSLPVTSLSSVST) has biased composition (low complexity). 26 O-linked (GalNAc...) threonine glycosylation sites follow: Thr-2283, Thr-2286, Thr-2287, Thr-2292, Thr-2299, Thr-2303, Thr-2308, Thr-2324, Thr-2331, Thr-2334, Thr-2335, Thr-2340, Thr-2347, Thr-2351, Thr-2356, Thr-2363, Thr-2366, Thr-2367, Thr-2372, Thr-2382, Thr-2383, Thr-2388, Thr-2395, Thr-2398, Thr-2399, and Thr-2406. Polar residues predominate over residues 2284–2301 (GDTTPLPVTSPSSASTGH). Residues 2309 to 2349 (DASSASTGHATPLPVTSLSSASTGDTTPLPVTSPSSASTGH) show a composition bias toward polar residues. The segment covering 2366–2399 (TTPLPVTSSSSASSGHTTPLPVTDASSASTGDTT) has biased composition (low complexity). Polar residues-rich tracts occupy residues 2404–2413 (TDTSSASTGH) and 2421–2445 (GLSS…STGH). N-linked (GlcNAc...) asparagine glycosylation is present at Asn-2437. 14 O-linked (GalNAc...) threonine glycosylation sites follow: Thr-2452, Thr-2454, Thr-2459, Thr-2462, Thr-2463, Thr-2468, Thr-2500, Thr-2507, Thr-2510, Thr-2511, Thr-2516, Thr-2518, Thr-2523, and Thr-2526. The span at 2452–2471 (TSTSSASTGDTTPLPGTDTS) shows a compositional bias: low complexity. Positions 2485-2510 (DASSVSTGDTTRLPVTSPSSASTGHT) are enriched in polar residues. Positions 2517 to 2573 (DTPSASTGDTTPLPVTNASSLSTRHATSLHVTSPSSASTGHATSLPVTDTSAASTGH) are enriched in polar residues. N-linked (GlcNAc...) asparagine glycosylation occurs at Asn-2533. 24 O-linked (GalNAc...) threonine glycosylation sites follow: Thr-2564, Thr-2566, Thr-2571, Thr-2575, Thr-2580, Thr-2582, Thr-2587, Thr-2590, Thr-2591, Thr-2596, Thr-2598, Thr-2619, Thr-2622, Thr-2623, Thr-2628, Thr-2660, Thr-2667, Thr-2670, Thr-2671, Thr-2676, Thr-2683, Thr-2687, Thr-2692, and Thr-2694. The segment covering 2580–2591 (TSTSSASTGDTT) has biased composition (low complexity). Polar residues-rich tracts occupy residues 2597–2637 (DTYS…STGH) and 2645–2691 (DASS…SLPV). Residues 2692 to 2704 (TDTSSASTGDTTS) show a composition bias toward low complexity. Residues 2705–2723 (LPVTDTSSAYTGDTTSLPV) show a composition bias toward polar residues. Residues 2724–2735 (TDTSSSSTGDTT) show a composition bias toward low complexity. O-linked (GalNAc...) threonine glycosylation is found at Thr-2740, Thr-2742, Thr-2750, Thr-2751, Thr-2756, Thr-2758, Thr-2763, and Thr-2767. Residues 2740 to 2750 (TETSSVSTGDT) show a composition bias toward polar residues. Residues 2756–2798 (TDTSSASTGHATPLPVTNTSSVSTGHATPLHVTSPSSASTGHT) are compositionally biased toward polar residues. Asn-2773 is a glycosylation site (N-linked (GlcNAc...) asparagine). O-linked (GalNAc...) threonine glycans are attached at residues Thr-2779, Thr-2783, Thr-2788, Thr-2795, Thr-2798, Thr-2799, and Thr-2804. Composition is skewed to polar residues over residues 2805 to 2814 (DASSVSTGHA) and 2837 to 2846 (IPSSASSGHT). O-linked (GalNAc...) threonine glycans are attached at residues Thr-2846, Thr-2847, and Thr-2852. The segment covering 2853 to 2877 (DASSVSTGHATSLPVTDASSVSTGH) has biased composition (polar residues). Positions 2895-2907 (TPLPLTSLSSVST) are enriched in low complexity. O-linked (GalNAc...) threonine glycans are attached at residues Thr-2910, Thr-2911, Thr-2916, Thr-2918, Thr-2923, Thr-2927, Thr-2932, Thr-2939, Thr-2942, Thr-2943, Thr-2948, Thr-2950, Thr-2955, Thr-2959, Thr-2966, Thr-2971, and Thr-2975. A compositionally biased stretch (polar residues) spans 2916-2942 (TDTSSASTGQATPLPVTSLSSVSTGDT). Polar residues predominate over residues 2948-2973 (TDTSSASTGHATSLPVTDTSSASTGH). Composition is skewed to polar residues over residues 2980–2989 (TDTSSASTGH) and 3009–3037 (LPVT…STGH). O-linked (GalNAc...) threonine glycans are attached at residues Thr-3023, Thr-3028, Thr-3035, and Thr-3039. Positions 3044 to 3069 (TDTSSASTGHANPLHVTSPSSASTGH) are enriched in polar residues. O-linked (GalNAc...) threonine glycans are attached at residues Thr-3071, Thr-3076, Thr-3078, Thr-3083, Thr-3087, Thr-3092, Thr-3099, Thr-3102, Thr-3103, Thr-3108, Thr-3115, Thr-3118, Thr-3119, Thr-3124, Thr-3126, Thr-3131, Thr-3135, Thr-3140, Thr-3142, Thr-3147, Thr-3150, Thr-3151, Thr-3156, Thr-3158, Thr-3163, Thr-3167, Thr-3172, Thr-3179, Thr-3182, Thr-3183, Thr-3188, Thr-3220, Thr-3227, Thr-3230, Thr-3231, Thr-3236, Thr-3243, Thr-3247, Thr-3252, and Thr-3254. Positions 3076–3118 (TDTSSASTGHATPLPVTSLSSVSTGDTTPLPVTSPSSASTGHT) are enriched in polar residues. Positions 3124 to 3134 (TDTSSASTGQA) are enriched in polar residues. Low complexity predominate over residues 3140–3151 (TSTSSASTGDTT). 2 stretches are compositionally biased toward polar residues: residues 3156-3197 (TDTS…STGH) and 3205-3251 (DASS…SLPV). The span at 3252 to 3264 (TDTSSASTGDTTS) shows a compositional bias: low complexity. Positions 3265–3283 (LPVTDTSSAYTGDTTSLPV) are enriched in polar residues. Low complexity predominate over residues 3284-3295 (TDTSSSSTGDTT). Residues Thr-3294, Thr-3332, Thr-3339, Thr-3342, Thr-3343, Thr-3348, Thr-3350, Thr-3355, and Thr-3359 are each glycosylated (O-linked (GalNAc...) threonine). Residues 3320 to 3337 (SASTGHATPLHVTSPSSA) show a composition bias toward polar residues. The span at 3338–3356 (STGDTTPVPVTDTSSVSTG) shows a compositional bias: low complexity. Polar residues-rich tracts occupy residues 3365–3374 (GLSSASTGDT) and 3381–3405 (DISS…STGD). Asn-3397 is a glycosylation site (N-linked (GlcNAc...) asparagine). O-linked (GalNAc...) threonine glycans are attached at residues Thr-3398, Thr-3403, Thr-3406, Thr-3412, Thr-3419, Thr-3423, Thr-3428, Thr-3430, Thr-3435, Thr-3439, and Thr-3444. The segment covering 3412-3421 (TSPSSASTGH) has biased composition (polar residues). Residues 3428–3471 (TSTSSASTGHATPVPVTSTSSASTGHTTPLPVTDTSSASTGDTT) are compositionally biased toward low complexity. Ser-3445 carries O-linked (GalNAc...) serine glycosylation. Residues Thr-3446, Thr-3451, Thr-3454, Thr-3455, Thr-3460, Thr-3462, Thr-3467, Thr-3470, Thr-3471, Thr-3476, Thr-3483, Thr-3486, Thr-3487, Thr-3492, Thr-3499, Thr-3502, Thr-3504, Thr-3508, Thr-3515, Thr-3519, Thr-3524, Thr-3526, Thr-3531, Thr-3535, Thr-3540, Thr-3547, Thr-3550, Thr-3551, Thr-3556, Thr-3567, Thr-3614, Thr-3615, Thr-3622, Thr-3678, Thr-3679, Thr-3686, Thr-3691, Thr-3695, Thr-3700, Thr-3710, Thr-3711, Thr-3716, Thr-3718, Thr-3723, Thr-3727, Thr-3732, Thr-3739, Thr-3743, Thr-3748, Thr-3780, Thr-3787, Thr-3790, Thr-3791, Thr-3796, Thr-3798, Thr-3803, Thr-3807, Thr-3812, Thr-3822, Thr-3823, Thr-3828, Thr-3835, Thr-3839, Thr-3844, Thr-3851, Thr-3854, Thr-3860, Thr-3867, Thr-3871, Thr-3876, Thr-3883, Thr-3886, Thr-3887, Thr-3892, Thr-3894, Thr-3899, Thr-3903, Thr-3935, Thr-3940, Thr-3942, Thr-3947, Thr-3950, Thr-3951, Thr-3956, Thr-3958, Thr-3963, Thr-3967, Thr-3972, Thr-3979, Thr-3983, Thr-3988, Thr-3990, Thr-3995, Thr-3999, Thr-4004, Thr-4006, Thr-4011, Thr-4015, and Thr-4020 are each glycosylated (O-linked (GalNAc...) threonine). A compositionally biased stretch (polar residues) spans 3473–3486 (LPVTSPSSASTGHT). Polar residues predominate over residues 3493–3517 (IPSSASTGDTSTLPVTGASSASTGH). Residues 3524-3550 (TDTSSVSTGHATPLPVTSLSSVSTGDT) show a composition bias toward polar residues. Positions 3557 to 3580 (DASSASTGQATPLPVTSLSSVSTG) are enriched in polar residues. Residues 3604–3615 (TDTSSASTGDTT) show a composition bias toward low complexity. Polar residues predominate over residues 3620–3644 (TDTSSASTGQATPLPVTSLSSVSTG). Residues 3668 to 3679 (TDTSSASTGDTT) are compositionally biased toward low complexity. Over residues 3684-3694 (TDTSSASTGQA) the composition is skewed to polar residues. The span at 3710–3728 (TTPLPVTSTSSVSTGHVTP) shows a compositional bias: low complexity. Residues 3730-3741 (HVTSPSSASTGH) are compositionally biased toward polar residues. Residues 3780–3791 (TDASSASTGDTT) show a composition bias toward low complexity. Positions 3796-3822 (TDTSSASTGQATPLPVTSLSSVSTGDT) are enriched in polar residues. A compositionally biased stretch (polar residues) spans 3860 to 3869 (TSPSSASTGH). The span at 3877–3886 (GLSSASTGDT) shows a compositional bias: polar residues. Over residues 3892–3901 (TDTSSASTRH) the composition is skewed to polar residues. Over residues 3940–3951 (TSTSSASTGDTT) the composition is skewed to low complexity. Over residues 3956–3981 (TDTSSVSTGHATSLPVTSRSSASTGH) the composition is skewed to polar residues. A compositionally biased stretch (polar residues) spans 3988–3997 (TDTSSVSTGH). Low complexity predominate over residues 3999–4011 (TPLPVTSTSSVST). Positions 4018-4029 (PVTSPSSASTGH) are enriched in polar residues. Ser-4021, Ser-4023, Ser-4024, and Ser-4026 each carry an O-linked (GalNAc...) serine glycan. Thr-4027, Thr-4031, and Thr-4036 each carry an O-linked (GalNAc...) threonine glycan. The segment covering 4030-4047 (ATPVPVTSTSSASTGDTT) has biased composition (low complexity). Residue Ser-4037 is glycosylated (O-linked (GalNAc...) serine). Thr-4038, Thr-4043, Thr-4046, and Thr-4047 each carry an O-linked (GalNAc...) threonine glycan. The segment covering 4049-4093 (LPVTNASSLSTGHATPLHVTSPSSASRGDTSTLPVTDASSASTGH) has biased composition (polar residues). Asn-4053 carries an N-linked (GlcNAc...) asparagine glycan. Residues Thr-4078 and Thr-4084 are each glycosylated (O-linked (GalNAc...) threonine). Residues 4095-4107 (TPLPLTSLSSVST) are compositionally biased toward low complexity. Thr-4110, Thr-4111, Thr-4116, Thr-4118, Thr-4123, Thr-4127, Thr-4132, Thr-4139, Thr-4142, Thr-4143, Thr-4148, Thr-4158, Thr-4159, Thr-4164, Thr-4171, Thr-4175, Thr-4180, Thr-4182, Thr-4187, Thr-4190, Thr-4191, Thr-4196, Thr-4198, Thr-4203, Thr-4207, Thr-4212, Thr-4214, Thr-4219, Thr-4223, and Thr-4239 each carry an O-linked (GalNAc...) threonine glycan. A compositionally biased stretch (polar residues) spans 4116–4142 (TDTSSASTGQATPLPVTSLSSVSTGDT). The segment covering 4149–4173 (IPSSASSGHTTSLPVTDASSVSTGH) has biased composition (polar residues). Residues 4180–4191 (TSTSSASTGDTT) show a composition bias toward low complexity. The segment covering 4196 to 4205 (TDTSSASTGH) has biased composition (polar residues). Polar residues predominate over residues 4212–4223 (TDTSSASTGHAT). Residues 4242-4254 (AVSSATSASTVSS) show a composition bias toward low complexity. Residues 4242–4288 (AVSSATSASTVSSDSPLKMETPGMTTPSLKTDGGRRTATSPPPTTSQ) are disordered. O-linked (GalNAc...) threonine glycosylation is found at Thr-4272, Thr-4278, Thr-4280, Thr-4289, Thr-4293, and Thr-4297. Residues 4397–4552 (PFWDDADFST…GLQFYRLHRE (156 aa)) enclose the NIDO domain. An AMOP domain is found at 4553 to 4668 (ERPNYRLECL…YLCALYQQRR (116 aa)). Positions 4680-4880 (QPAWMFGDPH…TWQINGTGLL (201 aa)) constitute a VWFD domain. N-linked (GlcNAc...) asparagine glycosylation is found at Asn-4715, Asn-4768, Asn-4787, Asn-4796, Asn-4831, Asn-4852, Asn-4875, Asn-4902, Asn-4928, Asn-4946, Asn-4982, Asn-4997, Asn-5045, Asn-5052, Asn-5100, and Asn-5119. The EGF-like 1 domain occupies 5118 to 5157 (QNQSCPVNYCYNQGHCYISQTLGCQPMCTCPPAFTDSRCF). Intrachain disulfides connect Cys-5122-Cys-5133, Cys-5127-Cys-5145, and Cys-5147-Cys-5156. Asn-5185, Asn-5192, and Asn-5292 each carry an N-linked (GlcNAc...) asparagine glycan. In terms of domain architecture, EGF-like 2 spans 5321–5360 (VSPCSRGYCDHGGQCQHLPSGPRCSCVSFSIYTAWGEHCE). Disulfide bonds link Cys-5324/Cys-5335, Cys-5329/Cys-5344, and Cys-5346/Cys-5359. The chain crosses the membrane as a helical span at residues 5369–5389 (FFGIFFGALGGLLLLGVGTFV).

As to quaternary structure, a heterodimeric complex, composed of a mucin-4 alpha chain and a cysteine-rich transmembrane mucin-4 beta chain. Mucin-4 beta chain interacts with ERBB2 via the EGF-like domain 1. In nonpolarized cells, associates with ERBB2 and ERBB3. Post-translationally, proteolytically cleaved into 2 chains, mucin-4 alpha chain and mucin-4 beta chain. In terms of processing, highly O-glycosylated. Is predominantly N-glycosylated. As to expression, expressed in the thymus, thyroid, lung, trachea, esophagus, stomach, small intestine, colon, testis, prostate, ovary, uterus, placenta, and mammary and salivary glands. Expressed in carcinomas arising from some of these epithelia, such as lung cancers, squamous cell carcinomas of the upper aerodigestive tract, mammary carcinomas, biliary tract, colon, and cervix cancers. Minimally or not expressed in the normal pancreas or chronic pancreatitis, but is highly expressed in pancreatic tumors and pancreatic tumor cell lines.

The protein resides in the cell membrane. It is found in the secreted. Its function is as follows. Membrane-bound mucin, a family of highly glycosylated proteins that constitute the major component of the mucus, the slimy and viscous secretion covering epithelial surfaces. These glycoproteins play important roles in the protection of the epithelium and are implicated in epithelial renewal and differentiation. Regulates cellular behavior through both anti-adhesive effects on cell-cell and cell-extracellular matrix interactions and its ability to act as an intramembrane ligand for ERBB2. Plays an important role in proliferation and differentiation of epithelial cells by inducing specific phosphorylation of ERBB2. In polarized epithelial cells, segregates ERBB2 and other ERBB receptors and prevents ERBB2 from acting as a coreceptor. The interaction with ERBB2 leads to enhanced expression of CDKN1B. The formation of a MUC4-ERBB2-ERBB3-NRG1 complex leads to down-regulation of CDKN1B, resulting in repression of apoptosis and stimulation of proliferation. Its ability to promote tumor growth may be mainly due to repression of apoptosis as opposed to proliferation. The polypeptide is Mucin-4 (MUC4) (Homo sapiens (Human)).